The chain runs to 1040 residues: MDWLLFRNICLLILFMVVLGVNSEFIVEVKELDIENGTTTWQTVRRQKREWIKFAAACREGEDNSKRNPIARIRSDCEVSQRITYRISGAGIDRPPYGVFTINPRTGEINITSVVDREITPLFLIHCRALNSRGEDLERPLELRVKVMDVNDNPPVFTQNVYTANIEENSDANALVVKLSATDADEDNHLNSKIAYKIISQEPAGAPMFMVNRYTGEVRTMSNFLDREQHSMYNLLVRGSDRDGATDGLSSECDCRIKILDVNDNFPILEKTSYSASIEENCLSSELIRLQAIDLDEEGTDNWLAQYSILSGNDGNWFEIQTDPKTNEGILKLVKMLDYEQEPNIYLSIGVRNQAEFHHSVASQFQMHSTPVRIQVINVREGPTFRPSSMTFSLRGGMRGDSLMNYVLGTYTAIDMDTGSPATNVRYVIGHDAGSWLKVDSRTGEIQFSREFDTKSKYITDGMYAAEILAIDDGSGRTATGTICIEVPDANDYCPVIYAESRSVCTHASSVRIYVNDHSFGAPFTFCVVDESPDTADIWDIRSINGTSAILMTEQTLSPGPYQIPILVKDSHNRACELPQTVLLDACLCDDYHVCLHSSTTGIYTGDTIWVTDDMGTVTDDGLRQSNVGLGPAGIGMIILGLLLLFLSPLLLLMCCCKRRQPEGLGTRFAPVPEGGEGVMQPWRIEGAHPEDRDVSNICVPMTASNTQDRIDSSEIYTNTYAGGGTVEGGVSGVELNTGVGTAAGIAAGGATGTLRKRSSTIGTLREYQDTGMNMAFLDSYFSEKAYAYADEDEGRPANDCLLIYDHEGTGSPVGSIGCCSWIVDDLDESYMETLDPKFRTLAEICLDTEIEPFPSHQACIPISTDLPLLGPNYFVNESSGMTLSEAEFQAEMAAASEPMIHGDIIVTETYTATDPCVQPTTIVFDSQLPPNVVVTETVMAPVYDVQGNICVPAEIANTHNVYYAERVVASPGVPDMGNGNIGDTCIGPVMSGGILVGPEIQVTQMMSPDIHISQTTRSTSPMTSQHRVTRYSNIHYSRQ.

The signal sequence occupies residues 1 to 23 (MDWLLFRNICLLILFMVVLGVNS). A propeptide spanning residues 24-49 (EFIVEVKELDIENGTTTWQTVRRQKR) is cleaved from the precursor. Cadherin domains are found at residues 50–157 (EWIK…PPVF), 158–269 (TQNV…FPIL), 270–385 (EKTS…GPTF), and 389–497 (SMTF…CPVI). The Extracellular segment spans residues 50–633 (EWIKFAAACR…RQSNVGLGPA (584 aa)). Asparagine 110 carries N-linked (GlcNAc...) asparagine glycosylation. Asparagine 545 carries N-linked (GlcNAc...) asparagine glycosylation. A helical membrane pass occupies residues 634–654 (GIGMIILGLLLLFLSPLLLLM). Residues 655–1040 (CCCKRRQPEG…RYSNIHYSRQ (386 aa)) are Cytoplasmic-facing. Desmoglein repeat repeat units follow at residues 883–909 (TLSE…IVTE) and 910–940 (TYTA…ETVM). The interval 1015-1040 (QTTRSTSPMTSQHRVTRYSNIHYSRQ) is disordered.

As to quaternary structure, interacts with JUP.

The protein resides in the cell membrane. It is found in the cell junction. Its subcellular location is the desmosome. A component of desmosome cell-cell junctions which are required for positive regulation of cellular adhesion. Coordinates the transition from proliferation to differentiation in hair follicle keratinocytes. Plays a role in moderating lymphocyte migration to inflamed skin and maintaining homeostasis of the epidermal inflammatory response. This Rattus norvegicus (Rat) protein is Desmoglein-4 (Dsg4).